The sequence spans 701 residues: Polyribonucleotide nucleotidyltransferase (701 aa).

The Mg(2+) site is built by Asp-485 and Asp-491. Residues Pro-552 to Ile-611 enclose the KH domain. One can recognise an S1 motif domain in the interval Gly-621 to Lys-689.

It belongs to the polyribonucleotide nucleotidyltransferase family. Mg(2+) serves as cofactor.

It is found in the cytoplasm. The enzyme catalyses RNA(n+1) + phosphate = RNA(n) + a ribonucleoside 5'-diphosphate. In terms of biological role, involved in mRNA degradation. Catalyzes the phosphorolysis of single-stranded polyribonucleotides processively in the 3'- to 5'-direction. In Caldicellulosiruptor saccharolyticus (strain ATCC 43494 / DSM 8903 / Tp8T 6331), this protein is Polyribonucleotide nucleotidyltransferase.